Here is a 389-residue protein sequence, read N- to C-terminus: Chitin-binding protein CbpD (389 aa).

An N-terminal signal peptide occupies residues 1 to 25 (MKHYSATLALLPLTLALFLPQAAHA). The Chitin-binding type-4 domain maps to 26-208 (HGSMETPPSR…EAFYACIDVS (183 aa)). Tyrosine 37 is subject to Phosphotyrosine. Residue serine 210 is modified to Phosphoserine.

It is found in the secreted. Functionally, binds but does not hydrolyze chitin. The chain is Chitin-binding protein CbpD (cpbD) from Pseudomonas aeruginosa (strain UCBPP-PA14).